The chain runs to 141 residues: ECDALQRFKVKHQWAEAFGTSHHRLDFGLKLWNSIFRDAPEIRGLFKRVDGDNAYSAEFEAHAERVLGGLDMTISLLDDQAAFDAQLAHLKSQHAERNIKADYYGVFVNELLAVLPDYLGTKLDFKAWSECLGVITGAIHD.

In terms of domain architecture, Globin spans 1 to 141 (ECDALQRFKV…LGVITGAIHD (141 aa)). A disulfide bridge links Cys-2 with Cys-131. His-94 serves as a coordination point for heme b.

It belongs to the globin family. As to quaternary structure, the giant hemoglobins of worms are formed of a monomeric subunit and a disulfide-bonded trimer. This subunit is monomeric.

It is found in the secreted. The sequence is that of Globin, extracellular monomeric from Tubifex tubifex (Sludge worm).